The primary structure comprises 273 residues: Large ribosomal subunit protein uL2cz/uL2cy (273 aa).

Disordered regions lie at residues 1 to 23 and 223 to 273; these read MAIH…SQVK and NPVD…RRSK.

Belongs to the universal ribosomal protein uL2 family. Part of the 50S ribosomal subunit.

It is found in the plastid. The protein localises to the chloroplast. This chain is Large ribosomal subunit protein uL2cz/uL2cy (rpl2-A), found in Oenothera argillicola (Appalachian evening primrose).